The following is a 226-amino-acid chain: Elongation factor 1-delta (226 aa).

A disordered region spans residues 82–131 (SSVATPPVADTKASAAEDDDDDDVDLFGEETEEEKKASEERAAAVKASGK). Residues 97–113 (AEDDDDDDVDLFGEETE) are compositionally biased toward acidic residues. Residues 114 to 124 (EEKKASEERAA) show a composition bias toward basic and acidic residues.

Belongs to the EF-1-beta/EF-1-delta family. As to quaternary structure, EF-1 is composed of 4 subunits: alpha, beta (1B-alpha=beta'), delta (1B-beta), and gamma (1B-gamma).

Functionally, EF-1-beta and EF-1-beta' stimulate the exchange of GDP bound to EF-1-alpha to GTP. The chain is Elongation factor 1-delta from Spuriopimpinella brachycarpa (Chamnamul).